Consider the following 302-residue polypeptide: Tyrosine recombinase XerC (302 aa).

The Core-binding (CB) domain maps to aspartate 6–leucine 90. The Tyr recombinase domain maps to proline 111 to aspartate 290. Active-site residues include arginine 150, lysine 174, histidine 242, arginine 245, and histidine 268. Tyrosine 277 acts as the O-(3'-phospho-DNA)-tyrosine intermediate in catalysis.

Belongs to the 'phage' integrase family. XerC subfamily. In terms of assembly, forms a cyclic heterotetrameric complex composed of two molecules of XerC and two molecules of XerD.

It localises to the cytoplasm. Its function is as follows. Site-specific tyrosine recombinase, which acts by catalyzing the cutting and rejoining of the recombining DNA molecules. The XerC-XerD complex is essential to convert dimers of the bacterial chromosome into monomers to permit their segregation at cell division. It also contributes to the segregational stability of plasmids. The sequence is that of Tyrosine recombinase XerC from Shewanella putrefaciens (strain CN-32 / ATCC BAA-453).